Here is a 107-residue protein sequence, read N- to C-terminus: U1-lycotoxin-Ls1g (107 aa).

A signal peptide spans 1 to 20; the sequence is MMKVLVVVALLVTLISYSSS. The propeptide occupies 21–41; that stretch reads EGIDDLEADELLSLMANEQTR. Intrachain disulfides connect Cys-51/Cys-68, Cys-58/Cys-86, and Cys-70/Cys-84.

Belongs to the neurotoxin 19 (CSTX) family. 04 (U1-Lctx) subfamily. Expressed by the venom gland.

It is found in the secreted. The chain is U1-lycotoxin-Ls1g from Lycosa singoriensis (Wolf spider).